Here is a 232-residue protein sequence, read N- to C-terminus: Large ribosomal subunit protein uL1 (232 aa).

Belongs to the universal ribosomal protein uL1 family. As to quaternary structure, part of the 50S ribosomal subunit.

Its function is as follows. Binds directly to 23S rRNA. The L1 stalk is quite mobile in the ribosome, and is involved in E site tRNA release. In terms of biological role, protein L1 is also a translational repressor protein, it controls the translation of the L11 operon by binding to its mRNA. The polypeptide is Large ribosomal subunit protein uL1 (Burkholderia lata (strain ATCC 17760 / DSM 23089 / LMG 22485 / NCIMB 9086 / R18194 / 383)).